Consider the following 159-residue polypeptide: METQRASLSLGRWSLWLLLLGLALPSASAQALSYREAVLRAVDQLNEKSSEANLYRLLELDPPPKEDDENPNIPKPVSFRVKETVCPRTSQQSPEQCDFKENGLLKECVGTVTLDQVGSNFDITCAVPQSVGGLRSLGRKILRAWKKYGPIIVPIIRIG.

An N-terminal signal peptide occupies residues 1–29; that stretch reads METQRASLSLGRWSLWLLLLGLALPSASA. A Pyrrolidone carboxylic acid modification is found at Q30. Positions 30–131 are excised as a propeptide; it reads QALSYREAVL…DITCAVPQSV (102 aa). 2 cysteine pairs are disulfide-bonded: C86–C97 and C108–C125.

This sequence belongs to the cathelicidin family.

Its subcellular location is the secreted. Exerts a potent antimicrobial activity against Gram-negative and Gram-positive bacteria, including methicillin-resistant Staphylococcus aureus, and fungi. This Bos taurus (Bovine) protein is Cathelicidin-5 (CATHL5).